Reading from the N-terminus, the 287-residue chain is Nucleotide-binding protein Sfri_3380 (287 aa).

8 to 15 contacts ATP; sequence GRSGSGKS. 56 to 59 lines the GTP pocket; it reads DVRN.

It belongs to the RapZ-like family.

Its function is as follows. Displays ATPase and GTPase activities. This is Nucleotide-binding protein Sfri_3380 from Shewanella frigidimarina (strain NCIMB 400).